We begin with the raw amino-acid sequence, 485 residues long: NADH-quinone oxidoreductase subunit N (485 aa).

Transmembrane regions (helical) follow at residues 8-28 (LIALLPLLIVGLTVVVVMLSI), 35-55 (FLNATLSVLGLNAALVSLWFV), 75-95 (LYTGLVLLASLATCTFAYPWL), 105-125 (FYLLVLIAALGGILLAGANHL), 127-147 (ALFLGIELISLPLFGLVGYAF), 159-179 (YTILSAAASSFLLFGMALVYA), 203-223 (LLAGLGLMIVGLGFKLSLVPF), 235-255 (PAPVSTFLATASKIAIFGVVM), 271-291 (VVLGLIAFASIIFGNLMALSQ), 297-317 (LLGYSSISHLGYLLVALIALQ), 326-346 (VGVYLAGYLFSSLGAFGVVSL), 374-394 (AVMTVMMLSLAGIPMTLGFIG), 408-430 (WWLVAAVVVGSAIGLYYYLRVAV), and 455-475 (IVVLISALLVLVLGIWPQPLI).

This sequence belongs to the complex I subunit 2 family. NDH-1 is composed of 13 different subunits. Subunits NuoA, H, J, K, L, M, N constitute the membrane sector of the complex.

It is found in the cell inner membrane. It carries out the reaction a quinone + NADH + 5 H(+)(in) = a quinol + NAD(+) + 4 H(+)(out). In terms of biological role, NDH-1 shuttles electrons from NADH, via FMN and iron-sulfur (Fe-S) centers, to quinones in the respiratory chain. The immediate electron acceptor for the enzyme in this species is believed to be ubiquinone. Couples the redox reaction to proton translocation (for every two electrons transferred, four hydrogen ions are translocated across the cytoplasmic membrane), and thus conserves the redox energy in a proton gradient. This Klebsiella pneumoniae (strain 342) protein is NADH-quinone oxidoreductase subunit N.